Reading from the N-terminus, the 179-residue chain is Peptidyl-tRNA hydrolase (179 aa).

A tRNA-binding site is contributed by Tyr14. His19 acts as the Proton acceptor in catalysis. Positions 60, 62, and 108 each coordinate tRNA.

Belongs to the PTH family. As to quaternary structure, monomer.

The protein localises to the cytoplasm. The catalysed reaction is an N-acyl-L-alpha-aminoacyl-tRNA + H2O = an N-acyl-L-amino acid + a tRNA + H(+). In terms of biological role, hydrolyzes ribosome-free peptidyl-tRNAs (with 1 or more amino acids incorporated), which drop off the ribosome during protein synthesis, or as a result of ribosome stalling. Its function is as follows. Catalyzes the release of premature peptidyl moieties from peptidyl-tRNA molecules trapped in stalled 50S ribosomal subunits, and thus maintains levels of free tRNAs and 50S ribosomes. The protein is Peptidyl-tRNA hydrolase of Mycoplasma mobile (strain ATCC 43663 / 163K / NCTC 11711) (Mesomycoplasma mobile).